Consider the following 83-residue polypeptide: Small integral membrane protein 22 (83 aa).

Residues 32-52 (VAFIVFLTFMGTVLLLLLLVV) traverse the membrane as a helical segment. The segment at 60-83 (SPGPRRESPRKERPKGVDNLALEP) is disordered. Residues 63 to 75 (PRRESPRKERPKG) are compositionally biased toward basic and acidic residues.

Interacts with CANX and DDOST. Interacts with SQLE; this interaction modulates lipid droplet formation.

It is found in the membrane. Its subcellular location is the late endosome. Functionally, may modulate lipid droplet formation throught interaction with SQLE. The chain is Small integral membrane protein 22 from Homo sapiens (Human).